A 205-amino-acid polypeptide reads, in one-letter code: Ribosomal RNA small subunit methyltransferase G (205 aa).

S-adenosyl-L-methionine is bound by residues Gly71, Phe76, 120-121, and Arg134; that span reads IE.

Belongs to the methyltransferase superfamily. RNA methyltransferase RsmG family.

It localises to the cytoplasm. The enzyme catalyses guanosine(527) in 16S rRNA + S-adenosyl-L-methionine = N(7)-methylguanosine(527) in 16S rRNA + S-adenosyl-L-homocysteine. Functionally, specifically methylates the N7 position of guanine in position 527 of 16S rRNA. The protein is Ribosomal RNA small subunit methyltransferase G of Paramagnetospirillum magneticum (strain ATCC 700264 / AMB-1) (Magnetospirillum magneticum).